A 165-amino-acid polypeptide reads, in one-letter code: NADPH-dependent 7-cyano-7-deazaguanine reductase (165 aa).

Cys-56 functions as the Thioimide intermediate in the catalytic mechanism. The active-site Proton donor is the Asp-63. Residues Val-78 to Ser-80 and His-97 to Glu-98 contribute to the substrate site.

The protein belongs to the GTP cyclohydrolase I family. QueF type 1 subfamily.

It is found in the cytoplasm. It carries out the reaction 7-aminomethyl-7-carbaguanine + 2 NADP(+) = 7-cyano-7-deazaguanine + 2 NADPH + 3 H(+). Its pathway is tRNA modification; tRNA-queuosine biosynthesis. Functionally, catalyzes the NADPH-dependent reduction of 7-cyano-7-deazaguanine (preQ0) to 7-aminomethyl-7-deazaguanine (preQ1). This chain is NADPH-dependent 7-cyano-7-deazaguanine reductase, found in Bacillus thuringiensis subsp. konkukian (strain 97-27).